We begin with the raw amino-acid sequence, 383 residues long: Guanine nucleotide-binding protein G(s) subunit alpha (383 aa).

The disordered stretch occupies residues 1–31 (MGCFGSAGSKQSDSNSSEDTKSQKRRSDAIT). Gly2 is lipidated: N-palmitoyl glycine. Cys3 is lipidated: S-palmitoyl cysteine. Positions 8-17 (GSKQSDSNSS) are enriched in polar residues. Positions 18-31 (EDTKSQKRRSDAIT) are enriched in basic and acidic residues. A G-alpha domain is found at 43–383 (ATHRLLLLGA…RMHLRQYELL (341 aa)). Residues 46-59 (RLLLLGAGESGKST) form a G1 motif region. GTP contacts are provided by residues 51-58 (GAGESGKS), 187-193 (LRCRVLT), 212-216 (DVGGQ), 281-284 (NKQD), and Ala355. Ser58 and Thr193 together coordinate Mg(2+). Residues 185 to 193 (DILRCRVLT) are G2 motif. Residues 208-217 (FHMFDVGGQR) form a G3 motif region. A G4 motif region spans residues 277–284 (ILFLNKQD). The segment at 353–358 (TCAVDT) is G5 motif.

This sequence belongs to the G-alpha family. G(s) subfamily. G proteins are composed of 3 units; alpha, beta and gamma. The alpha chain contains the guanine nucleotide binding site.

In terms of biological role, guanine nucleotide-binding proteins (G proteins) are involved as modulators or transducers in various transmembrane signaling systems. The G(s) protein is involved in hormonal regulation of adenylate cyclase: it activates the cyclase. Participates in olfactory signal transduction. The polypeptide is Guanine nucleotide-binding protein G(s) subunit alpha (Anopheles gambiae (African malaria mosquito)).